Here is a 228-residue protein sequence, read N- to C-terminus: Aquaporin Z (228 aa).

2 helical membrane passes run 1–21 (MLNK…GGCG) and 23–43 (AILA…ALAF). The short motif at 63–65 (NPA) is the NPA 1 element. 3 helical membrane passes run 82-102 (IPYW…LYVI), 129-149 (MMAG…IILG), and 154-174 (LAPA…IHLV). The short motif at 184–186 (NPA) is the NPA 2 element. The helical transmembrane segment at 205-225 (LFWVAPLVGAVIGAIIWKGLL) threads the bilayer.

Belongs to the MIP/aquaporin (TC 1.A.8) family. In terms of assembly, homotetramer.

It localises to the cell inner membrane. It catalyses the reaction H2O(in) = H2O(out). Its function is as follows. Channel that permits osmotically driven movement of water in both directions. It is involved in the osmoregulation and in the maintenance of cell turgor during volume expansion in rapidly growing cells. It mediates rapid entry or exit of water in response to abrupt changes in osmolarity. The chain is Aquaporin Z from Brucella abortus biovar 1 (strain 9-941).